We begin with the raw amino-acid sequence, 266 residues long: uncharacterized protein (266 aa).

The chain crosses the membrane as a helical span at residues isoleucine 13–histidine 33.

Belongs to the LicD transferase family.

The protein resides in the membrane. This is an uncharacterized protein from Rickettsia prowazekii (strain Madrid E).